Reading from the N-terminus, the 428-residue chain is Adenylosuccinate synthetase (428 aa).

GTP contacts are provided by residues 12–18 and 40–42; these read GDEGKGK and GHT. The active-site Proton acceptor is Asp-13. Mg(2+)-binding residues include Asp-13 and Gly-40. IMP-binding positions include 13-16, 38-41, Thr-128, Arg-142, Gln-223, Thr-238, and Arg-302; these read DEGK and NAGH. His-41 (proton donor) is an active-site residue. 298–304 serves as a coordination point for substrate; that stretch reads TTTGRPR. Residues Arg-304, 330 to 332, and 412 to 414 each bind GTP; these read KLD and GVG.

This sequence belongs to the adenylosuccinate synthetase family. In terms of assembly, homodimer. The cofactor is Mg(2+).

The protein localises to the cytoplasm. The enzyme catalyses IMP + L-aspartate + GTP = N(6)-(1,2-dicarboxyethyl)-AMP + GDP + phosphate + 2 H(+). The protein operates within purine metabolism; AMP biosynthesis via de novo pathway; AMP from IMP: step 1/2. In terms of biological role, plays an important role in the de novo pathway of purine nucleotide biosynthesis. Catalyzes the first committed step in the biosynthesis of AMP from IMP. The chain is Adenylosuccinate synthetase from Kineococcus radiotolerans (strain ATCC BAA-149 / DSM 14245 / SRS30216).